A 671-amino-acid chain; its full sequence is ATP-dependent zinc metalloprotease FtsH (671 aa).

At 1-22 (MANPNNNNDNKQNNNNNFFNDN) the chain is on the cytoplasmic side. The helical transmembrane segment at 23–43 (PLLAFAIFSIVIILIFKSFVG) threads the bilayer. The Periplasmic segment spans residues 44–130 (EGESLGTMMN…ISYEGVVGNG (87 aa)). Residues 131-151 (FFSELISMMLPILIFFAIWIF) traverse the membrane as a helical segment. Residues 152–671 (LAKKMSKGMG…SEESDNNKEA (520 aa)) are Cytoplasmic-facing. 224-231 (GPPGTGKT) contacts ATP. A Zn(2+)-binding site is contributed by H447. E448 is an active-site residue. Positions 451 and 525 each coordinate Zn(2+). Residues 630 to 671 (EKGMPSRLAHKDKVAKNKAEADKKEEALKKEISEESDNNKEA) are disordered.

The protein in the central section; belongs to the AAA ATPase family. It in the C-terminal section; belongs to the peptidase M41 family. Homohexamer. The cofactor is Zn(2+).

Its subcellular location is the cell inner membrane. Acts as a processive, ATP-dependent zinc metallopeptidase for both cytoplasmic and membrane proteins. Plays a role in the quality control of integral membrane proteins. The sequence is that of ATP-dependent zinc metalloprotease FtsH from Sulfurovum sp. (strain NBC37-1).